The primary structure comprises 280 residues: Probable inactive shikimate kinase like 1, chloroplastic (280 aa).

A chloroplast-targeting transit peptide spans 1-54 (MEIFSASASLTLTGFVPRLLPLLSPQARTTLCKPLLSSSSTRLISCHSRIAPSR).

The protein belongs to the shikimate kinase family.

Its subcellular location is the plastid. It is found in the chloroplast. In terms of biological role, required for chloroplast biogenesis. This Arabidopsis thaliana (Mouse-ear cress) protein is Probable inactive shikimate kinase like 1, chloroplastic (SKL1).